We begin with the raw amino-acid sequence, 387 residues long: Patatin group A-3 (387 aa).

The N-terminal stretch at Met-1–Ala-23 is a signal peptide. Residues Leu-32–Val-230 enclose the PNPLA domain. Residues Gly-36 to Gly-41 carry the GXGXXG motif. The GXSXG motif lies at Gly-75 to Gly-79. The Nucleophile role is filled by Ser-77. An N-linked (GlcNAc...) asparagine glycan is attached at Asn-115. The active-site Proton acceptor is Asp-216. The DGA/G signature appears at Asp-216 to Ala-218. A coiled-coil region spans residues Glu-361 to Ala-385.

This sequence belongs to the patatin family. In terms of tissue distribution, tuber and stolon.

The protein resides in the vacuole. Probable lipolytic acyl hydrolase (LAH), an activity which is thought to be involved in the response of tubers to pathogens. In Solanum tuberosum (Potato), this protein is Patatin group A-3.